Here is a 1249-residue protein sequence, read N- to C-terminus: Protein transport protein Sec31A (1249 aa).

7 WD repeats span residues 4 to 47, 64 to 111, 120 to 160, 166 to 206, 209 to 254, 258 to 298, and 301 to 342; these read KEID…EIFE, SSSH…AGDK, KHTG…TPMT, QPPE…PIIK, DHSN…SPLR, NHAR…VLYE, and TNTQ…DGLR. The interaction with SEC13 stretch occupies residues 161-470; sequence PGAKTQPPED…IDASQTDFEK (310 aa). One copy of the WD 8; interaction with SEC13 repeat lies at 397–429; sequence SFSFGGKLVTFENVTGQPQQGAEQPRRQPVFIS. Arg-423 bears the Asymmetric dimethylarginine mark. Residues Ser-526 and Ser-531 each carry the phosphoserine modification. Residue Lys-647 forms a Glycyl lysine isopeptide (Lys-Gly) (interchain with G-Cter in ubiquitin) linkage. Disordered stretches follow at residues 790 to 829, 842 to 940, and 954 to 1123; these read QGRS…VQSQ, TTWS…RYPN, and PHMY…PIGN. The segment covering 796–805 has biased composition (polar residues); it reads GQESSRSSYE. Ser-799 carries the post-translational modification Phosphoserine. Residues 800 to 1142 form an interaction with PDCD6 region; sequence SRSSYEGQPL…TEKITKKPIP (343 aa). The short motif at 873 to 879 is the ALG-2-binding site motif-2 (ABS-2) element; the sequence is GFIMHGN. Pro residues predominate over residues 898–908; sequence QPPPYPQPQPY. Composition is skewed to low complexity over residues 961 to 970 and 991 to 1007; these read PASSPTSSSA and PSSS…GTPP. Residues 1013 to 1024 show a composition bias toward polar residues; that stretch reads PASQRTGPQNGW. Low complexity predominate over residues 1056-1074; it reads PGGDPQPQGLQQQPSASGP. Thr-1190 carries the phosphothreonine modification. At Ser-1192 the chain carries Phosphoserine. Residue Lys-1246 forms a Glycyl lysine isopeptide (Lys-Gly) (interchain with G-Cter in ubiquitin) linkage.

The protein belongs to the WD repeat SEC31 family. COPII is composed of at least 5 proteins: the SEC23/24 complex, the SEC13/31 complex and SAR1. SEC13 and SEC31 make a 2:2 tetramer that forms the edge element of the COPII outer coat. The tetramer self-assembles in multiple copies to form the complete polyhedral cage. Interacts (via WD 8) with SEC13. Interacts with PDCD6; interaction takes place in response to cytosolic calcium increase and leads to bridge together the BCR(KLHL12) complex and SEC31A, leading to monoubiquitination. Interacts with KLHL12. Post-translationally, monoubiquitinated by the BCR(KLHL12) E3 ubiquitin ligase complex, leading to regulate the size of COPII coats. As to expression, ubiquitously expressed.

Its subcellular location is the cytoplasm. It is found in the cytoplasmic vesicle. It localises to the COPII-coated vesicle membrane. The protein localises to the endoplasmic reticulum membrane. Component of the coat protein complex II (COPII) which promotes the formation of transport vesicles from the endoplasmic reticulum (ER). The coat has two main functions, the physical deformation of the endoplasmic reticulum membrane into vesicles and the selection of cargo molecules. This chain is Protein transport protein Sec31A (Sec31a), found in Rattus norvegicus (Rat).